The chain runs to 404 residues: MDLQKPPNFMLDCGMAPHMMPPINWAAAAIAVASSTSGATNATSSNSVATSQQLQHHPYGTAAGGYKHAQQAIPKSVTPYSDATNCKKSSNHIKRPMNAFMVWSQMERRKICEHQPDMHNAEISKQLGSRWRSLTDEEKAPFVAEAERLRVCHMQEYPDYKYKPRKKPKKNPDGTLQQPAQPQAPQQQQAPPRGASPQARQRKRPNTDQQSETQQFQNFKSVKVEQDWMGNAHMSHAQKMPFHPSYPSPSEFGHAPLTPESGFYDDYFTQQHHQQHFASQHHNSAGSPLRMTNLGMDMGMPPQMMGHNSGFGAGNHPFYLHTSPPSVDQDDMRSLSSGSSGYADCSASEQSTSSPNSAGVVTMATAATTTTHLDDLEQICPTVTTGELVNYPWSDALGIDINFS.

The HMG box DNA-binding region spans I93 to K161. Disordered regions lie at residues P158–N218 and H321–G359. Low complexity predominate over residues Q177–A199. Polar residues-rich tracts occupy residues T207–N218 and A347–G359.

The protein resides in the nucleus. Probable transcription factor required for embryogenesis, vulval development and cell fate specification of the postembryonic mesoderm (also known as the M lineage). Specifically, required for the specification of sex myoblast cells and their development into the muscles that are necessary for egg-laying. In addition, may be involved in RME GABAergic motor neuron progenitor cell fate specification. The protein is Transcription factor sem-2 of Caenorhabditis elegans.